The following is a 177-amino-acid chain: Bifunctional protein PyrR (177 aa).

Residues Ser42–Arg43, Asp104–Thr112, and Arg137 contribute to the substrate site. Positions Val100 to Thr112 match the PRPP-binding motif.

The protein belongs to the purine/pyrimidine phosphoribosyltransferase family. PyrR subfamily.

The enzyme catalyses UMP + diphosphate = 5-phospho-alpha-D-ribose 1-diphosphate + uracil. In terms of biological role, regulates the transcription of the pyrimidine nucleotide (pyr) operon in response to exogenous pyrimidines. Functionally, also displays a weak uracil phosphoribosyltransferase activity which is not physiologically significant. The sequence is that of Bifunctional protein PyrR from Fusobacterium nucleatum subsp. nucleatum (strain ATCC 25586 / DSM 15643 / BCRC 10681 / CIP 101130 / JCM 8532 / KCTC 2640 / LMG 13131 / VPI 4355).